The primary structure comprises 256 residues: Phosphonates import ATP-binding protein PhnC (256 aa).

In terms of domain architecture, ABC transporter spans 5–253 (LRITGLVKEY…MLKTIYGGES (249 aa)). 38 to 45 (GPSGTGKS) lines the ATP pocket.

This sequence belongs to the ABC transporter superfamily. Phosphonates importer (TC 3.A.1.9.1) family. The complex is composed of two ATP-binding proteins (PhnC), two transmembrane proteins (PhnE) and a solute-binding protein (PhnD).

The protein localises to the cell inner membrane. It catalyses the reaction phosphonate(out) + ATP + H2O = phosphonate(in) + ADP + phosphate + H(+). Part of the ABC transporter complex PhnCDE involved in phosphonates import. Responsible for energy coupling to the transport system. In Bordetella parapertussis (strain 12822 / ATCC BAA-587 / NCTC 13253), this protein is Phosphonates import ATP-binding protein PhnC.